The sequence spans 169 residues: NADH-quinone oxidoreductase subunit B (169 aa).

4 residues coordinate [4Fe-4S] cluster: C42, C43, C107, and C136.

Belongs to the complex I 20 kDa subunit family. As to quaternary structure, NDH-1 is composed of 14 different subunits. Subunits NuoB, C, D, E, F, and G constitute the peripheral sector of the complex. [4Fe-4S] cluster is required as a cofactor.

It is found in the cell inner membrane. It carries out the reaction a quinone + NADH + 5 H(+)(in) = a quinol + NAD(+) + 4 H(+)(out). Its function is as follows. NDH-1 shuttles electrons from NADH, via FMN and iron-sulfur (Fe-S) centers, to quinones in the respiratory chain. Couples the redox reaction to proton translocation (for every two electrons transferred, four hydrogen ions are translocated across the cytoplasmic membrane), and thus conserves the redox energy in a proton gradient. The sequence is that of NADH-quinone oxidoreductase subunit B from Campylobacter hominis (strain ATCC BAA-381 / DSM 21671 / CCUG 45161 / LMG 19568 / NCTC 13146 / CH001A).